The sequence spans 428 residues: Histidine--tRNA ligase (428 aa).

It belongs to the class-II aminoacyl-tRNA synthetase family. Homodimer.

It localises to the cytoplasm. The enzyme catalyses tRNA(His) + L-histidine + ATP = L-histidyl-tRNA(His) + AMP + diphosphate + H(+). This chain is Histidine--tRNA ligase, found in Sorangium cellulosum (strain So ce56) (Polyangium cellulosum (strain So ce56)).